A 670-amino-acid polypeptide reads, in one-letter code: Glycine--tRNA ligase beta subunit (670 aa).

This sequence belongs to the class-II aminoacyl-tRNA synthetase family. As to quaternary structure, tetramer of two alpha and two beta subunits.

It localises to the cytoplasm. It carries out the reaction tRNA(Gly) + glycine + ATP = glycyl-tRNA(Gly) + AMP + diphosphate. The chain is Glycine--tRNA ligase beta subunit from Thermotoga neapolitana (strain ATCC 49049 / DSM 4359 / NBRC 107923 / NS-E).